The chain runs to 376 residues: Chaperone protein DnaJ (376 aa).

In terms of domain architecture, J spans 5 to 70; it reads DYYEILGVER…QKRAAYDKFG (66 aa). The CR-type zinc-finger motif lies at 131-209; the sequence is GVSKEIKVPT…CHGDGRVQKT (79 aa). Positions 144, 147, 161, 164, 183, 186, 197, and 200 each coordinate Zn(2+). CXXCXGXG motif repeat units lie at residues 144-151, 161-168, 183-190, and 197-204; these read CDECHGSG, CPTCHGSG, CPHCHGKG, and CRKCHGDG.

This sequence belongs to the DnaJ family. As to quaternary structure, homodimer. It depends on Zn(2+) as a cofactor.

The protein localises to the cytoplasm. In terms of biological role, participates actively in the response to hyperosmotic and heat shock by preventing the aggregation of stress-denatured proteins and by disaggregating proteins, also in an autonomous, DnaK-independent fashion. Unfolded proteins bind initially to DnaJ; upon interaction with the DnaJ-bound protein, DnaK hydrolyzes its bound ATP, resulting in the formation of a stable complex. GrpE releases ADP from DnaK; ATP binding to DnaK triggers the release of the substrate protein, thus completing the reaction cycle. Several rounds of ATP-dependent interactions between DnaJ, DnaK and GrpE are required for fully efficient folding. Also involved, together with DnaK and GrpE, in the DNA replication of plasmids through activation of initiation proteins. In Tolumonas auensis (strain DSM 9187 / NBRC 110442 / TA 4), this protein is Chaperone protein DnaJ.